We begin with the raw amino-acid sequence, 524 residues long: 3-epi-6-deoxocathasterone 23-monooxygenase CYP90C1 (524 aa).

The helical transmembrane segment at 25 to 45 (YLVAGFLVLTAGILLRPWLWL) threads the bilayer. Cys-463 is a heme binding site.

This sequence belongs to the cytochrome P450 family. It depends on heme as a cofactor. As to expression, widely expressed.

Its subcellular location is the endoplasmic reticulum membrane. The catalysed reaction is 3-epi-6-deoxocathasterone + reduced [NADPH--hemoprotein reductase] + O2 = 6-deoxotyphasterol + oxidized [NADPH--hemoprotein reductase] + H2O + H(+). It carries out the reaction (22S,24R)-22-hydroxy-5alpha-ergostan-3-one + reduced [NADPH--hemoprotein reductase] + O2 = 3-dehydro-6-deoxoteasterone + oxidized [NADPH--hemoprotein reductase] + H2O + H(+). It functions in the pathway plant hormone biosynthesis; brassinosteroid biosynthesis. Involved in brassinosteroid (BR) biosynthesis. Converts typhasterol (TY) to cathasterone (CS) and 6-deoxotyphasterol (6-deoxoTY) to 6-deoxocathasterone (6-deoxoCT). C-23 hydroxylase that converts directly (22S,24R)-22-hydroxy-5-alpha-ergostan-3-one and 3-epi-6-deoxocathasterone to 3-dehydro-6-deoxoteasterone (6-deoxo3DT, 6-deoxo3DHT) and 6-deoxotyphasterol (6-deoxoTY), respectively. These C-23 hydroxylation shortcuts bypass campestanol, 6-deoxocathasterone, and 6-deoxoteasterone (6-deoxoTE). Also catalyzes the conversion of cathasterone to teasterone (TE), (22S,24R)-22-hydroxyergost-4-en-3-one (22-OH-4-en-3-one) to (22R,23R)-22,23-dihydroxy-campest-4-en-3-one (22,23-diOH-4-en-3-one) and (22S)-22-hydroxycampesterol (22-OHCR) to (22R,23R)-22,23-dihydroxycampesterol (22,23-diOHCR). Required for the regulation of polar elongation of leaf cells. Required for the longitudinal elongation of floral organs. This Arabidopsis thaliana (Mouse-ear cress) protein is 3-epi-6-deoxocathasterone 23-monooxygenase CYP90C1.